The following is a 191-amino-acid chain: GDP-mannose pyrophosphatase (191 aa).

Residues tyrosine 17, 38-40 (KRE), arginine 67, and 85-87 (AGL) each bind GDP-alpha-D-mannose. Positions 43-180 (DRGNGATILL…EIRDGKTVLL (138 aa)) constitute a Nudix hydrolase domain. Mg(2+) is bound by residues alanine 85, glutamate 100, and glutamate 104. Residues 86 to 106 (GLLDNDEPEVCIRKEAIEETG) carry the Nudix box motif. GDP-alpha-D-mannose-binding positions include glutamate 104, glutamate 127, 150-151 (DE), and lysine 176. Residue glutamate 151 participates in Mg(2+) binding.

This sequence belongs to the Nudix hydrolase family. NudK subfamily. In terms of assembly, homodimer. It depends on Mg(2+) as a cofactor.

The catalysed reaction is GDP-alpha-D-mannose + H2O = alpha-D-mannose 1-phosphate + GMP + 2 H(+). Functionally, nucleoside diphosphate sugar hydrolase that hydrolyzes GDP-mannose as its preferred substrate, yielding GMP and mannose-1-phosphate. The protein is GDP-mannose pyrophosphatase (nudK) of Escherichia coli (strain K12 / DH10B).